Reading from the N-terminus, the 640-residue chain is Chaperone protein HtpG (640 aa).

An a; substrate-binding region spans residues 1 to 348 (MADVAHQETH…SNDLPLNVSR (348 aa)). A b region spans residues 349–565 (EILQDNKITQ…GTGMSTQMIK (217 aa)). The interval 566-640 (LMQAAGQPVP…LNTLLMNLAK (75 aa)) is c.

It belongs to the heat shock protein 90 family. As to quaternary structure, homodimer.

It localises to the cytoplasm. Its function is as follows. Molecular chaperone. Has ATPase activity. This is Chaperone protein HtpG from Pseudoalteromonas atlantica (strain T6c / ATCC BAA-1087).